Here is a 275-residue protein sequence, read N- to C-terminus: Ribosomal RNA small subunit methyltransferase A (275 aa).

S-adenosyl-L-methionine-binding residues include N21, L23, G48, E69, D94, and N115.

The protein belongs to the class I-like SAM-binding methyltransferase superfamily. rRNA adenine N(6)-methyltransferase family. RsmA subfamily.

It localises to the cytoplasm. The enzyme catalyses adenosine(1518)/adenosine(1519) in 16S rRNA + 4 S-adenosyl-L-methionine = N(6)-dimethyladenosine(1518)/N(6)-dimethyladenosine(1519) in 16S rRNA + 4 S-adenosyl-L-homocysteine + 4 H(+). Functionally, specifically dimethylates two adjacent adenosines (A1518 and A1519) in the loop of a conserved hairpin near the 3'-end of 16S rRNA in the 30S particle. May play a critical role in biogenesis of 30S subunits. The polypeptide is Ribosomal RNA small subunit methyltransferase A (Clostridium botulinum (strain Okra / Type B1)).